A 207-amino-acid chain; its full sequence is Small ribosomal subunit protein uS4c (207 aa).

The 64-residue stretch at 92-155 (MRLDNILFRL…TYQSILSKRI (64 aa)) folds into the S4 RNA-binding domain.

This sequence belongs to the universal ribosomal protein uS4 family. Part of the 30S ribosomal subunit. Contacts protein S5. The interaction surface between S4 and S5 is involved in control of translational fidelity.

Its subcellular location is the plastid. It localises to the chloroplast. One of the primary rRNA binding proteins, it binds directly to 16S rRNA where it nucleates assembly of the body of the 30S subunit. Its function is as follows. With S5 and S12 plays an important role in translational accuracy. In Equisetum scirpoides (Dwarf-scouring rush), this protein is Small ribosomal subunit protein uS4c (rps4).